Consider the following 266-residue polypeptide: Putative carbamate hydrolase RutD (266 aa).

The protein belongs to the AB hydrolase superfamily. Hydrolase RutD family.

It catalyses the reaction carbamate + 2 H(+) = NH4(+) + CO2. Involved in pyrimidine catabolism. May facilitate the hydrolysis of carbamate, a reaction that can also occur spontaneously. This chain is Putative carbamate hydrolase RutD, found in Escherichia coli O7:K1 (strain IAI39 / ExPEC).